An 87-amino-acid polypeptide reads, in one-letter code: Exendin-3 (87 aa).

The N-terminal stretch at 1–21 (MKIILWLCVFGLFLATLFPVS) is a signal peptide. The propeptide occupies 22–45 (WQMPVESGLSSEDSASSESFASKI). Ser-86 carries the serine amide modification.

Belongs to the glucagon family. As to expression, expressed by the venom gland.

Its subcellular location is the secreted. Its function is as follows. Stimulates vasoactive intestinal peptide (VIP) receptors in high concentrations (&gt;100 nM), resulting in both an increase in cAMP and amylase secretion from pancreatic acini, although at low concentrations (between 0.3 and 3 nM) it increases cAMP without stimulating amylase release. Stimulates the GLP-1 receptor (GLP1R). Induces hypotension that is mediated by relaxation of cardiac smooth muscle. This Heloderma horridum horridum (Mexican beaded lizard) protein is Exendin-3.